The sequence spans 449 residues: C4-dicarboxylate transport protein (449 aa).

Helical transmembrane passes span 18–38 (PFYL…ALLG), 61–81 (MIIS…VAHV), 93–113 (VYFL…AHVV), 159–179 (FVGD…IALA), 202–222 (LVQM…AFTI), 244–264 (SLLF…FSIL), 311–331 (GYSF…LFIA), and 369–389 (AATL…ILGV).

The protein belongs to the dicarboxylate/amino acid:cation symporter (DAACS) (TC 2.A.23) family.

It localises to the cell inner membrane. Functionally, responsible for the transport of dicarboxylates such as succinate, fumarate, and malate from the periplasm across the membrane. This chain is C4-dicarboxylate transport protein, found in Xylella fastidiosa (strain M12).